The primary structure comprises 307 residues: Ribosomal RNA small subunit methyltransferase H (307 aa).

Residues 34-36, aspartate 53, leucine 88, aspartate 102, and glutamine 109 contribute to the S-adenosyl-L-methionine site; that span reads GGH.

It belongs to the methyltransferase superfamily. RsmH family.

The protein resides in the cytoplasm. The enzyme catalyses cytidine(1402) in 16S rRNA + S-adenosyl-L-methionine = N(4)-methylcytidine(1402) in 16S rRNA + S-adenosyl-L-homocysteine + H(+). Its function is as follows. Specifically methylates the N4 position of cytidine in position 1402 (C1402) of 16S rRNA. The polypeptide is Ribosomal RNA small subunit methyltransferase H (Sulfurimonas denitrificans (strain ATCC 33889 / DSM 1251) (Thiomicrospira denitrificans (strain ATCC 33889 / DSM 1251))).